The following is a 151-amino-acid chain: UPF0756 membrane protein Dred_1676 (151 aa).

4 helical membrane-spanning segments follow: residues 9-29, 47-67, 75-95, and 111-131; these read VILLLIGLVAQSNLIAICASV, THGLELGLLFLLLSILVPIAT, LLYNVSSLPGFLSIVGGILAT, and IIFGLIVGSVIGIIFFNGQPV.

This sequence belongs to the UPF0756 family.

The protein localises to the cell membrane. This chain is UPF0756 membrane protein Dred_1676, found in Desulforamulus reducens (strain ATCC BAA-1160 / DSM 100696 / MI-1) (Desulfotomaculum reducens).